Consider the following 585-residue polypeptide: PiggyBac transposable element-derived protein 4 (585 aa).

Residues 1-73 (MSNPRKRSIP…STSSDSGRSM (73 aa)) form a disordered region. A compositionally biased stretch (acidic residues) spans 25–40 (DSFDESDFSEIDDSDN). The span at 47–61 (EADKIRPLSHLESDG) shows a compositional bias: basic and acidic residues. Residues 62–72 (KSSTSSDSGRS) are compositionally biased toward low complexity.

This chain is PiggyBac transposable element-derived protein 4 (PGBD4), found in Homo sapiens (Human).